The chain runs to 659 residues: Beta-galactosidase BgaA (659 aa).

Arg-103 is a binding site for substrate. Residue Cys-107 participates in Zn(2+) binding. Asn-141 serves as a coordination point for substrate. Catalysis depends on Glu-142, which acts as the Proton donor. Residues Cys-148, Cys-150, and Cys-153 each contribute to the Zn(2+) site. Glu-298 (nucleophile) is an active-site residue. Trp-307 is a substrate binding site.

It belongs to the glycosyl hydrolase 42 family. As to quaternary structure, dimer.

It carries out the reaction Hydrolysis of terminal non-reducing beta-D-galactose residues in beta-D-galactosides.. With respect to regulation, inhibited by Cu(2+), Hg(2+) and Zn(2+). No effect with Ca(2+), Mg(2+), Mn(2+) or excess EDTA (10 mM). Its function is as follows. Involved in plant cell wall degradation in cooperation with cellulosome. Hydrolyzes both p-nitrophenyl-alpha-L-arabinopyranoside (pNPAp) and p-nitrophenyl-beta-D-galactopyranoside (pNPGp), with higher activity for pNPAp. Shows hydrolysis activity against p-nitrophenyl-beta-D-fucopyranoside (pNPFp), but not against p-nitrophenyl-alpha-L-arabinofuranoside (pNPAf), o-nitrophenyl-beta-D-galactopyranoside (oNPGp), p-nitrophenyl-beta-D-xylopyranoside (pNPXp), p-nitrophenyl-beta-D-glucopyranoside (pNPGLp), p-nitrophenyl-beta-D-cellobiopyranoside (pNPCp), p-nitrophenyl-beta-lactopyranoside (pNPLp) or p-nitrophenyl-alpha-galactopyranoside (pNPalphaGp). No detectable activity against arabinan or arabinoxylan, but activity against arabinogalactan can be detected. Increases degradation activity of alpha-L-arabinofuranosidase (ArfA) and endo-1,4-beta-xylanase (XynA) when corn fiber gum and corn stem powder are used as substrates. The polypeptide is Beta-galactosidase BgaA (bgaA) (Clostridium cellulovorans (strain ATCC 35296 / DSM 3052 / OCM 3 / 743B)).